Here is a 450-residue protein sequence, read N- to C-terminus: MGDTRVTVIGGGLAGSEAAWQLARAGVAVELVEMKPERRSPAHVLPGLAELVCSNSLRSDNPQNAVGLLHEELRRLGSLVLGCADATRVPAGDALAVDRERFSEAVTARLSGHPGVRIVHREVEDLPPPPALAVIATGPLTGDALAARLAEATGGRLHFYDAIAPIVAAESIDRSIAYARSRYGKGSGDDYLNLPLDEAQYHAFVDALLQGEKVPAHGFEEPRYFEGCLPIEVMAERGTEVLAHGPLKPVGLEDPRTGRWPHAVVQLRREDVEGTAWNLVGFQTRLTWPEQRRIFRAFLPGLANAEFVRLGQIHRNTFVDAPRVLAPDLSVRAAPHLFLAGQITGVEGYVESAACGLMAARAVLDRLAERAFRPPPAATALGALHRHLTGEAHPPGYDYQPSNVVFALFPPLTGRHRGKAGRKEAHVERARKELAPWIDTAPPPAVPAAG.

10–15 (GGGLAG) provides a ligand contact to FAD.

Belongs to the MnmG family. TrmFO subfamily. FAD is required as a cofactor.

It localises to the cytoplasm. The catalysed reaction is uridine(54) in tRNA + (6R)-5,10-methylene-5,6,7,8-tetrahydrofolate + NADH + H(+) = 5-methyluridine(54) in tRNA + (6S)-5,6,7,8-tetrahydrofolate + NAD(+). The enzyme catalyses uridine(54) in tRNA + (6R)-5,10-methylene-5,6,7,8-tetrahydrofolate + NADPH + H(+) = 5-methyluridine(54) in tRNA + (6S)-5,6,7,8-tetrahydrofolate + NADP(+). Functionally, catalyzes the folate-dependent formation of 5-methyl-uridine at position 54 (M-5-U54) in all tRNAs. The sequence is that of Methylenetetrahydrofolate--tRNA-(uracil-5-)-methyltransferase TrmFO from Anaeromyxobacter dehalogenans (strain 2CP-C).